Consider the following 624-residue polypeptide: Ubiquilin-2 (624 aa).

Disordered stretches follow at residues 1–32 (MAEN…EPKI) and 106–141 (NRPQ…TNSN). An N-acetylalanine modification is found at A2. Residues 15–32 (RGPAAAQGSAAAPAEPKI) show a composition bias toward low complexity. One can recognise a Ubiquitin-like domain in the interval 33-107 (IKVTVKTPKE…VHLVIKSQNR (75 aa)). Residues 106-115 (NRPQGQSTQP) show a composition bias toward polar residues. Residues 116–141 (SNAAGTNTTSASTPRSNSTPISTNSN) show a composition bias toward low complexity. STI1 domains follow at residues 178 to 206 (SPEM…QLIM) and 208 to 247 (NPQM…MQEM). Residues 287–349 (FGGNPFASVG…SGSGNSSSNA (63 aa)) form a disordered region. Low complexity predominate over residues 294–304 (SVGSSSSSGEG). Residues 316-325 (LPNPWAPPPA) are compositionally biased toward pro residues. Over residues 326-349 (TQSSATTSTTTSTGSGSGNSSSNA) the composition is skewed to low complexity. 2 consecutive STI1 domains span residues 379 to 426 (NPQL…QEQM) and 430 to 462 (LPAF…QQGL). 12 consecutive repeat copies span residues 491–493 (PVG), 494–496 (PVT), 497–499 (PIG), 500–502 (PIG), 503–505 (PIV), 506–508 (PFT), 509–511 (PIG), 512–514 (PIG), 515–517 (PIG), 518–520 (PTG), 521–523 (PAA), and 524–526 (PPG). The segment at 491-526 (PVGPVTPIGPIGPIVPFTPIGPIGPIGPTGPAAPPG) is 12 X 3 AA tandem repeats of P-X-X. The segment at 512–556 (PIGPIGPTGPAAPPGSTGSGGPTGPTVSSAAPSETTSPTSESGPN) is disordered. The span at 535–553 (GPTVSSAAPSETTSPTSES) shows a compositional bias: low complexity. Residues 581–621 (RFQQQLEQLNAMGFLNREANLQALIATGGDINAAIERLLGS) form the UBA domain.

As to quaternary structure, homodimer. Forms heterodimer with UBQLN1. Binds UBE3A and BTRC. Interacts with the 19S proteasome subunit. Interacts with C9orf72. Interacts with HNRNPA1 and HNRNPU. Found in a complex with UBQLN1 and MAP1LC3A/B/C. Interacts with EPS15, EPN1 and EPN2. Interacts with HERPUD1. Interacts with RAD23A. Interacts with TARDBP. Interacts (via C-terminus) with FAF2 (via N-terminus). Interacts with UBQLN4. Binds CD47. Post-translationally, degraded during macroautophagy.

The protein localises to the cytoplasm. Its subcellular location is the nucleus. It localises to the membrane. The protein resides in the cytoplasmic vesicle. It is found in the autophagosome. Its function is as follows. Plays an important role in the regulation of different protein degradation mechanisms and pathways including ubiquitin-proteasome system (UPS), autophagy and the endoplasmic reticulum-associated protein degradation (ERAD) pathway. Mediates the proteasomal targeting of misfolded or accumulated proteins for degradation by binding (via UBA domain) to their polyubiquitin chains and by interacting (via ubiquitin-like domain) with the subunits of the proteasome. Plays a role in the ERAD pathway via its interaction with ER-localized proteins FAF2/UBXD8 and HERPUD1 and may form a link between the polyubiquitinated ERAD substrates and the proteasome. Involved in the regulation of macroautophagy and autophagosome formation; required for maturation of autophagy-related protein LC3 from the cytosolic form LC3-I to the membrane-bound form LC3-II and may assist in the maturation of autophagosomes to autolysosomes by mediating autophagosome-lysosome fusion. Negatively regulates the endocytosis of GPCR receptors: AVPR2 and ADRB2, by specifically reducing the rate at which receptor-arrestin complexes concentrate in clathrin-coated pits (CCPs). The polypeptide is Ubiquilin-2 (UBQLN2) (Homo sapiens (Human)).